A 207-amino-acid chain; its full sequence is Fibroblast growth factor 18 (207 aa).

The first 27 residues, M1–A27, serve as a signal peptide directing secretion. N-linked (GlcNAc...) asparagine glycosylation occurs at N39. Cysteines 109 and 127 form a disulfide. N-linked (GlcNAc...) asparagine glycosylation occurs at N137.

It belongs to the heparin-binding growth factors family. As to quaternary structure, interacts with FGFR3 and FGFR4.

It localises to the secreted. Plays an important role in the regulation of cell proliferation, cell differentiation and cell migration. Required for normal ossification and bone development. Stimulates hepatic and intestinal proliferation. The sequence is that of Fibroblast growth factor 18 (Fgf18) from Mus musculus (Mouse).